A 58-amino-acid polypeptide reads, in one-letter code: Putative transcript Y 13 protein (58 aa).

The chain crosses the membrane as a helical span at residues 17 to 37 (LLGWDLNLSLFLGLCLMLLLA).

The protein resides in the membrane. This chain is Putative transcript Y 13 protein (TTTY13), found in Homo sapiens (Human).